We begin with the raw amino-acid sequence, 226 residues long: Teichuronic acid biosynthesis protein TuaF (226 aa).

2 helical membrane-spanning segments follow: residues asparagine 15–serine 35 and valine 202–phenylalanine 222.

The protein resides in the cell membrane. Its pathway is cell wall biogenesis; teichuronic acid biosynthesis. The sequence is that of Teichuronic acid biosynthesis protein TuaF (tuaF) from Bacillus subtilis (strain 168).